The chain runs to 322 residues: Follistatin-A (322 aa).

The first 32 residues, 1 to 32 (MLRMLKRQQLHPGMILLLFWLCYLIEDQKVQA), serve as a signal peptide directing secretion. A TB domain is found at 33–106 (GNCWLQQGKN…TCDNVDCGPG (74 aa)). 8 cysteine pairs are disulfide-bonded: Cys35-Cys58, Cys45-Cys91, Cys59-Cys94, Cys98-Cys109, Cys103-Cys119, Cys121-Cys153, Cys125-Cys146, and Cys135-Cys167. N-linked (GlcNAc...) asparagine glycosylation is present at Asn75. Residues 97-120 (TCDNVDCGPGKRCKMNRRSKPRCV) form the Follistatin-like 1 domain. Kazal-like domains follow at residues 103-169 (CGPG…KCKK), 189-244 (NAYC…KCIK), and 267-321 (RGRC…SCNC). Asn127 carries an N-linked (GlcNAc...) asparagine glycan. A Follistatin-like 2 domain is found at 170-193 (TCRDVLCPGSSTCVVDQTNNAYCV). 3 disulfides stabilise this stretch: Cys195-Cys228, Cys199-Cys221, and Cys210-Cys242. The region spanning 247-271 (SCDDIHCSAGKKCLWDAKMSRGRCA) is the Follistatin-like 3 domain. Disulfide bonds link Cys273–Cys305, Cys277–Cys298, and Cys287–Cys319. A glycan (N-linked (GlcNAc...) asparagine) is linked at Asn291.

As to quaternary structure, monomer. As to expression, not expressed in the organizer region. Expression in gastrulating embryos is confined to anterior and paraxial regions, which give rise to head mesoderm and the first five somites. In addition, expressed transiently in a subset of cells in the posterior notochord anlage. Later, expression is seen in brain, eyes and somites.

In terms of biological role, binds directly to activin and functions as an activin antagonist. Specific inhibitor of the biosynthesis and secretion of pituitary follicle stimulating hormone (fsh). Inhibits bmp-signaling during later stages of development including late phases of dorsoventral patterning, to refine the early pattern set up by the interaction of chordino and bmp2/4. Not involved in organizer function or early phases of dorsoventral pattern formation. This is Follistatin-A (fsta) from Danio rerio (Zebrafish).